A 63-amino-acid chain; its full sequence is Large ribosomal subunit protein bL32c (63 aa).

The interval 39-63 (SFSSGNEHPKPKGFSGQQTNNKIFE) is disordered. Polar residues predominate over residues 53–63 (SGQQTNNKIFE).

The protein belongs to the bacterial ribosomal protein bL32 family.

Its subcellular location is the plastid. The protein resides in the chloroplast. This Triticum aestivum (Wheat) protein is Large ribosomal subunit protein bL32c.